The following is an 833-amino-acid chain: Kinesin-like protein KIFC3 (833 aa).

A disordered region spans residues 19 to 74; that stretch reads LWRVGRAPEPEPGMARPAPAPASPAARPFPHTGPGRLRTGRGKDTPVCGDEDSSAR. Positions 30 to 48 are enriched in low complexity; it reads PGMARPAPAPASPAARPFP. Coiled-coil stretches lie at residues 102–362 and 395–432; these read LTLQ…ENLA and LLQEALRSVKAEIGQAIEEVNSNNQELLRKYRRELQLR. The 324-residue stretch at 445 to 768 folds into the Kinesin motor domain; it reads NIRVIARVRP…LKFAERVRSV (324 aa). ATP is bound at residue 528-535; it reads GQTGAGKT. The tract at residues 786–833 is disordered; the sequence is EHLEWEPACQTPQPSARAHSAPSSGTSSRPGSIRRKLQPSGKSRPLPV. Residues 806–815 show a composition bias toward polar residues; the sequence is APSSGTSSRP. 2 positions are modified to phosphoserine: S813 and S817.

Belongs to the TRAFAC class myosin-kinesin ATPase superfamily. Kinesin family.

The protein resides in the cell junction. It is found in the adherens junction. It localises to the cytoplasm. The protein localises to the cytoskeleton. Its subcellular location is the microtubule organizing center. The protein resides in the centrosome. It is found in the cytoplasmic vesicle membrane. Functionally, minus-end microtubule-dependent motor protein. Involved in apically targeted transport. Required for zonula adherens maintenance. The sequence is that of Kinesin-like protein KIFC3 (KIFC3) from Homo sapiens (Human).